A 240-amino-acid polypeptide reads, in one-letter code: Ribosomal RNA small subunit methyltransferase G (240 aa).

Residues glycine 80, phenylalanine 85, 103-105, 131-132, and arginine 150 each bind S-adenosyl-L-methionine; these read DSS and AE.

Belongs to the methyltransferase superfamily. RNA methyltransferase RsmG family.

The protein localises to the cytoplasm. In terms of biological role, specifically methylates the N7 position of a guanine in 16S rRNA. The polypeptide is Ribosomal RNA small subunit methyltransferase G (Thermoanaerobacter pseudethanolicus (strain ATCC 33223 / 39E) (Clostridium thermohydrosulfuricum)).